Consider the following 250-residue polypeptide: Aliphatic sulfonates import ATP-binding protein SsuB 2 (250 aa).

An ABC transporter domain is found at 13–229 (VRLQGLTRSF…SYRDPLLGEY (217 aa)). 45 to 52 (GHSGSGKS) serves as a coordination point for ATP.

It belongs to the ABC transporter superfamily. Aliphatic sulfonates importer (TC 3.A.1.17.2) family. The complex is composed of two ATP-binding proteins (SsuB), two transmembrane proteins (SsuC) and a solute-binding protein (SsuA).

It is found in the cell membrane. It carries out the reaction ATP + H2O + aliphatic sulfonate-[sulfonate-binding protein]Side 1 = ADP + phosphate + aliphatic sulfonateSide 2 + [sulfonate-binding protein]Side 1.. In terms of biological role, part of the ABC transporter complex SsuABC involved in aliphatic sulfonates import. Responsible for energy coupling to the transport system. The sequence is that of Aliphatic sulfonates import ATP-binding protein SsuB 2 from Streptomyces avermitilis (strain ATCC 31267 / DSM 46492 / JCM 5070 / NBRC 14893 / NCIMB 12804 / NRRL 8165 / MA-4680).